Here is a 119-residue protein sequence, read N- to C-terminus: Large ribosomal subunit protein uL14 (119 aa).

This sequence belongs to the universal ribosomal protein uL14 family. As to quaternary structure, part of the 50S ribosomal subunit. Forms a cluster with proteins L3 and L19. In the 70S ribosome, L14 and L19 interact and together make contacts with the 16S rRNA in bridges B5 and B8.

Its function is as follows. Binds to 23S rRNA. Forms part of two intersubunit bridges in the 70S ribosome. This chain is Large ribosomal subunit protein uL14, found in Ehrlichia canis (strain Jake).